Here is a 556-residue protein sequence, read N- to C-terminus: F-box protein YDR131C (556 aa).

In terms of domain architecture, F-box spans 1-44 (MFDKLPYEIFKQIAWRIPQEDKISLTYVCKRSYESIIPFIYQNL).

As to quaternary structure, interacts with SKP1. Component of the probable SCF(YDR131C) complex containing CDC53, SKP1, RBX1 and YDR131C.

It localises to the vacuole. It functions in the pathway protein modification; protein ubiquitination. Its function is as follows. Substrate recognition component of a SCF (SKP1-CUL1-F-box protein) E3 ubiquitin-protein ligase complex which mediates the ubiquitination and subsequent proteasomal degradation of target proteins. Probably recognizes and binds to phosphorylated target proteins. The polypeptide is F-box protein YDR131C (Saccharomyces cerevisiae (strain ATCC 204508 / S288c) (Baker's yeast)).